A 119-amino-acid chain; its full sequence is Large ribosomal subunit protein uL24 (119 aa).

Belongs to the universal ribosomal protein uL24 family. As to quaternary structure, part of the 50S ribosomal subunit.

Its function is as follows. One of two assembly initiator proteins, it binds directly to the 5'-end of the 23S rRNA, where it nucleates assembly of the 50S subunit. Functionally, located at the polypeptide exit tunnel on the outside of the subunit. The protein is Large ribosomal subunit protein uL24 of Haloquadratum walsbyi (strain DSM 16790 / HBSQ001).